The following is a 331-amino-acid chain: Hyaluronidase B (331 aa).

Cystine bridges form between Cys19–Cys308 and Cys185–Cys197. Asn79 carries N-linked (GlcNAc...) asparagine glycosylation. Glu109 (proton donor) is an active-site residue.

Belongs to the glycosyl hydrolase 56 family. As to expression, expressed by the venom gland.

Its subcellular location is the secreted. The catalysed reaction is Random hydrolysis of (1-&gt;4)-linkages between N-acetyl-beta-D-glucosamine and D-glucuronate residues in hyaluronate.. Its function is as follows. Hydrolyzes high molecular weight hyaluronic acid to produce small oligosaccharides. This is Hyaluronidase B from Vespa velutina (Asian yellow-legged hornet).